A 335-amino-acid chain; its full sequence is NAC domain-containing protein 87 (335 aa).

The region spanning 21 to 172 is the NAC domain; that stretch reads LPPGFRFHPT…EWVVCRVFHK (152 aa). The DNA-binding element occupies 119-178; it reads VGMKKTLVFYRGRAPKGEKTNWVMHEYRLEGKYSYYNLPKSARDEWVVCRVFHKNNPSTT.

The protein resides in the nucleus. Binds to the promoter regions of genes involved in chlorophyll catabolic processes, such as NYC1, SGR1, SGR2 and PAO. The polypeptide is NAC domain-containing protein 87 (Arabidopsis thaliana (Mouse-ear cress)).